The primary structure comprises 1207 residues: MPDMLEQTNALLAALKKPSTNVDQRLQLFSNVKSNIKHNRVPEECQAPIFECIRIAISATTSATLVSTGFSTLSHFIKRLQLQRETAVITSQSSKLCALLLEKLGDARESHRSASLQILADLHPLCPLEVETLIHNAMKGTNARAKDTSMTWVVKMNQTENLPFRAYSAQMIANLEDADAGVRDTAKHAVVDLFTSAPEHAKANLKKQLVSTNVRKAIATYITAHLDGAATGGAHEEMPPPPPAVRERPLPTQRAQTLQPDHGIADALAAEQPPPTEAVTMDPIHIYTQRELEDIFRDMAPPFEGRESEGNWLARDKNTTKLRRILMGNAPAEFPGAFVAGIKSLLEGILKVANTLRTTMSTNGCQLVQELAKTLRHAIDPWVEILLQCFIKMCAATKNIAAQNGNVTVEAIISNVSYNNRILQHVSFAATNALRASWVKTLIRKHKAHVEHSGGLDTLEKIIRKGVTDANPKVREAYRSTYWTFALVWPQRAEAMFETLEKREKTALEKDPNNPNASLASSQSSAVSSFSKSVGAGAARNALKEKIAEQRRAKMAASKVPERPMSAAATYSPVKSASTKSLSARTASTASTASNGPARPPSAMSGESTKSALKNSSGTGSLMSGTVRRPIRRPELNRPATADPYAVRRAGNGKTTPSMTPEKTPAVTTTKKSVAPKSSVRPRAQTQNSPNVSPIRSRSRLGQSTTVQKTASASSRQASPAPSASKDEDLELTIVKPFVRSQSHHDPGTIPFRQRNGLDKSAVFDNETVLSGDEDNFTMVIPNLARPTAQSIHHTPPKTHSPSHLSAPSPRASMLRSPKSMGDINGFGFRSSTRSPRVRSPDRPSTRGTDAQEGVQVFEDPFVGDEPAAVEHEVEKPVLGELPINEKNIERRPSNESISSDTVMGNASEDRPRGHHKTTSTGSVLYSESNDTNNAEVLKNRQLLASGIKKIESRTVESHMFRRMQDMIRSNHEIWGANDENFGCLLLACLDFLEVPTEELKTTPIKVANLKVQALATIRAMLSLYRKETAKYFSRVLCTVLQTKAQYENTSHIAIDLETTAEEIVRYGQTSDCLNAVLALIEDLPSSTPTSSPSSKSSLTSLPGAGQTRTATMALSTLAALIQISGAKNITLSPDQTSRLGKLAVRCMDDQDADVRKSNIEFCIALHERIAAPAGEQENDGFWRAVAGAREQHLNLLTYYLAKRRAA.

Disordered stretches follow at residues 504–525 (EKTALEKDPNNPNASLASSQSS), 549–730 (EQRR…DEDL), 789–856 (AQSI…EGVQ), 869–928 (AVEH…LYSE), and 1086–1105 (SSTPTSSPSSKSSLTSLPGA). Positions 576-594 (SASTKSLSARTASTASTAS) are enriched in low complexity. Polar residues-rich tracts occupy residues 605–624 (SGESTKSALKNSSGTGSLMS), 653–672 (GKTTPSMTPEKTPAVTTTKK), and 684–710 (AQTQNSPNVSPIRSRSRLGQSTTVQKT). 2 stretches are compositionally biased toward low complexity: residues 711–724 (ASASSRQASPAPSA) and 791–806 (SIHHTPPKTHSPSHLS). Residues 869-878 (AVEHEVEKPV) show a composition bias toward basic and acidic residues. Polar residues-rich tracts occupy residues 895-905 (NESISSDTVMG) and 919-928 (TSTGSVLYSE).

The protein belongs to the CLASP family. As to quaternary structure, interacts with microtubules.

The protein localises to the cytoplasm. It is found in the cytoskeleton. Its subcellular location is the nucleus. It localises to the spindle. Microtubule binding protein that promotes the stabilization of dynamic microtubules. Required for mitotic spindle formation. This is Protein STU1 (STU1) from Phaeosphaeria nodorum (strain SN15 / ATCC MYA-4574 / FGSC 10173) (Glume blotch fungus).